We begin with the raw amino-acid sequence, 386 residues long: Succinate--CoA ligase [ADP-forming] subunit beta (386 aa).

An ATP-grasp domain is found at 9-244; it reads KEILKQYGVK…LDEEDEKEIE (236 aa). Residues Lys46, 53-55, Glu99, Cys102, and Glu107 each bind ATP; that span reads GRG. Mg(2+) is bound by residues Asn199 and Asp213. Substrate-binding positions include Asn264 and 321 to 323; that span reads GIM.

It belongs to the succinate/malate CoA ligase beta subunit family. Heterotetramer of two alpha and two beta subunits. The cofactor is Mg(2+).

The enzyme catalyses succinate + ATP + CoA = succinyl-CoA + ADP + phosphate. It catalyses the reaction GTP + succinate + CoA = succinyl-CoA + GDP + phosphate. It functions in the pathway carbohydrate metabolism; tricarboxylic acid cycle; succinate from succinyl-CoA (ligase route): step 1/1. Succinyl-CoA synthetase functions in the citric acid cycle (TCA), coupling the hydrolysis of succinyl-CoA to the synthesis of either ATP or GTP and thus represents the only step of substrate-level phosphorylation in the TCA. The beta subunit provides nucleotide specificity of the enzyme and binds the substrate succinate, while the binding sites for coenzyme A and phosphate are found in the alpha subunit. This Brevibacillus brevis (strain 47 / JCM 6285 / NBRC 100599) protein is Succinate--CoA ligase [ADP-forming] subunit beta.